Here is a 204-residue protein sequence, read N- to C-terminus: Kunitz type trypsin inhibitor 106 (204 aa).

The first 26 residues, 1 to 26 (MSMRLSIRTLIILAHVCLFITTTTIA), serve as a signal peptide directing secretion. N-linked (GlcNAc...) asparagine glycosylation is present at asparagine 62. Cysteine 65 and cysteine 112 are oxidised to a cystine. A glycan (N-linked (GlcNAc...) asparagine) is linked at asparagine 141. 2 disulfides stabilise this stretch: cysteine 164–cysteine 176 and cysteine 169–cysteine 172.

It belongs to the protease inhibitor I3 (leguminous Kunitz-type inhibitor) family. In terms of assembly, interacts with SCP1 and CP. In terms of tissue distribution, expressed at low levels in non-mycorrhizal roots.

Its subcellular location is the secreted. The protein localises to the extracellular space. It localises to the apoplast. Its function is as follows. Protease inhibitor that, together with SCP1, controls mycorrhiza establishment and arbuscule development during root colonization by arbuscular mycorrhizal (AM) fungi (e.g. Rhizophagus irregularis), probably by degrading SCP1 in the apoplast of the periarbuscular region. This Medicago truncatula (Barrel medic) protein is Kunitz type trypsin inhibitor 106.